Consider the following 357-residue polypeptide: Peptide chain release factor 1 (357 aa).

An N5-methylglutamine modification is found at Gln234. The disordered stretch occupies residues 249–308 (PSGVEVSCQDEKSQHKNRSKAMRVLRSRVYEKKREEQQAEREEARRSMVGSGDRSAKIRT). Basic residues predominate over residues 263–274 (HKNRSKAMRVLR). Basic and acidic residues predominate over residues 276–294 (RVYEKKREEQQAEREEARR).

It belongs to the prokaryotic/mitochondrial release factor family. Methylated by PrmC. Methylation increases the termination efficiency of RF1.

The protein localises to the cytoplasm. Peptide chain release factor 1 directs the termination of translation in response to the peptide chain termination codons UAG and UAA. The chain is Peptide chain release factor 1 from Salinibacter ruber (strain DSM 13855 / M31).